A 392-amino-acid polypeptide reads, in one-letter code: Phospho-N-acetylmuramoyl-pentapeptide-transferase (392 aa).

The next 11 helical transmembrane spans lie at 24–44 (YLTLRAVMAALTALLIGLIAG), 76–96 (TMGGVLILGSIAISTLLWFDL), 100–120 (FVWIVLAVTLGFGAIGWVDDW), 137–157 (YFWQSVIGLLAALYLVFSISE), 167–187 (FITWVQSGFLMDLPPKAGLLV), 193–213 (VSYPLGVLGFVILTYLVIVGS), 225–245 (GLAIMPVIMVGASLGIFAYVT), 262–282 (SGELLIFCAAMAGAGLAFLWF), 289–309 (VFMGDVGALALGAALGTIAVI), 314–334 (IVLAIMGGIFVVEALSVMLQV), and 369–389 (QVVVRFWIITMLLCLVGLTTL).

This sequence belongs to the glycosyltransferase 4 family. MraY subfamily. Mg(2+) serves as cofactor.

The protein localises to the cell inner membrane. It catalyses the reaction UDP-N-acetyl-alpha-D-muramoyl-L-alanyl-gamma-D-glutamyl-meso-2,6-diaminopimeloyl-D-alanyl-D-alanine + di-trans,octa-cis-undecaprenyl phosphate = di-trans,octa-cis-undecaprenyl diphospho-N-acetyl-alpha-D-muramoyl-L-alanyl-D-glutamyl-meso-2,6-diaminopimeloyl-D-alanyl-D-alanine + UMP. It functions in the pathway cell wall biogenesis; peptidoglycan biosynthesis. Its function is as follows. Catalyzes the initial step of the lipid cycle reactions in the biosynthesis of the cell wall peptidoglycan: transfers peptidoglycan precursor phospho-MurNAc-pentapeptide from UDP-MurNAc-pentapeptide onto the lipid carrier undecaprenyl phosphate, yielding undecaprenyl-pyrophosphoryl-MurNAc-pentapeptide, known as lipid I. The polypeptide is Phospho-N-acetylmuramoyl-pentapeptide-transferase (Acidovorax ebreus (strain TPSY) (Diaphorobacter sp. (strain TPSY))).